A 177-amino-acid polypeptide reads, in one-letter code: Ribosome maturation factor RimM (177 aa).

A PRC barrel domain is found at 98–177 (DDGYYWKDLM…TIEVDWDPGF (80 aa)).

Belongs to the RimM family. As to quaternary structure, binds ribosomal protein uS19.

It localises to the cytoplasm. Functionally, an accessory protein needed during the final step in the assembly of 30S ribosomal subunit, possibly for assembly of the head region. Essential for efficient processing of 16S rRNA. May be needed both before and after RbfA during the maturation of 16S rRNA. It has affinity for free ribosomal 30S subunits but not for 70S ribosomes. The polypeptide is Ribosome maturation factor RimM (Enterobacter sp. (strain 638)).